A 146-amino-acid chain; its full sequence is Urease accessory protein UreE 1 (146 aa).

Belongs to the UreE family.

It localises to the cytoplasm. Functionally, involved in urease metallocenter assembly. Binds nickel. Probably functions as a nickel donor during metallocenter assembly. This chain is Urease accessory protein UreE 1, found in Pseudomonas syringae pv. tomato (strain ATCC BAA-871 / DC3000).